The primary structure comprises 465 residues: ATP-dependent protease ATPase subunit HslU (465 aa).

ATP contacts are provided by residues Val-20, 62–67 (GVGKTE), Asp-277, Glu-343, and Arg-415.

Belongs to the ClpX chaperone family. HslU subfamily. A double ring-shaped homohexamer of HslV is capped on each side by a ring-shaped HslU homohexamer. The assembly of the HslU/HslV complex is dependent on binding of ATP.

Its subcellular location is the cytoplasm. Functionally, ATPase subunit of a proteasome-like degradation complex; this subunit has chaperone activity. The binding of ATP and its subsequent hydrolysis by HslU are essential for unfolding of protein substrates subsequently hydrolyzed by HslV. HslU recognizes the N-terminal part of its protein substrates and unfolds these before they are guided to HslV for hydrolysis. The sequence is that of ATP-dependent protease ATPase subunit HslU from Geobacillus kaustophilus (strain HTA426).